We begin with the raw amino-acid sequence, 209 residues long: Uracil phosphoribosyltransferase (209 aa).

Residues Arg79, Arg104, and 131–139 contribute to the 5-phospho-alpha-D-ribose 1-diphosphate site; that span reads DPMLATGGS. Uracil contacts are provided by residues Ile194 and 199 to 201; that span reads GDA. Asp200 is a binding site for 5-phospho-alpha-D-ribose 1-diphosphate.

The protein belongs to the UPRTase family. Mg(2+) is required as a cofactor.

It carries out the reaction UMP + diphosphate = 5-phospho-alpha-D-ribose 1-diphosphate + uracil. The protein operates within pyrimidine metabolism; UMP biosynthesis via salvage pathway; UMP from uracil: step 1/1. With respect to regulation, allosterically activated by GTP. Functionally, catalyzes the conversion of uracil and 5-phospho-alpha-D-ribose 1-diphosphate (PRPP) to UMP and diphosphate. The chain is Uracil phosphoribosyltransferase from Clostridium perfringens (strain ATCC 13124 / DSM 756 / JCM 1290 / NCIMB 6125 / NCTC 8237 / Type A).